The primary structure comprises 353 residues: Quinolinate synthase (353 aa).

2 residues coordinate iminosuccinate: H47 and S68. Position 113 (C113) interacts with [4Fe-4S] cluster. Iminosuccinate contacts are provided by residues 139 to 141 and S156; that span reads YAN. Residue C200 participates in [4Fe-4S] cluster binding. Iminosuccinate contacts are provided by residues 226 to 228 and T243; that span reads HPE. C297 lines the [4Fe-4S] cluster pocket.

This sequence belongs to the quinolinate synthase family. Type 1 subfamily. Requires [4Fe-4S] cluster as cofactor.

Its subcellular location is the cytoplasm. The enzyme catalyses iminosuccinate + dihydroxyacetone phosphate = quinolinate + phosphate + 2 H2O + H(+). It participates in cofactor biosynthesis; NAD(+) biosynthesis; quinolinate from iminoaspartate: step 1/1. In terms of biological role, catalyzes the condensation of iminoaspartate with dihydroxyacetone phosphate to form quinolinate. The chain is Quinolinate synthase from Vibrio campbellii (strain ATCC BAA-1116).